The following is a 379-amino-acid chain: Glucose-1-phosphate adenylyltransferase (379 aa).

Alpha-D-glucose 1-phosphate is bound by residues Y99, G164, E179–K180, and S190.

The protein belongs to the bacterial/plant glucose-1-phosphate adenylyltransferase family. As to quaternary structure, homotetramer.

It catalyses the reaction alpha-D-glucose 1-phosphate + ATP + H(+) = ADP-alpha-D-glucose + diphosphate. It participates in glycan biosynthesis; glycogen biosynthesis. Functionally, involved in the biosynthesis of ADP-glucose, a building block required for the elongation reactions to produce glycogen. Catalyzes the reaction between ATP and alpha-D-glucose 1-phosphate (G1P) to produce pyrophosphate and ADP-Glc. This is Glucose-1-phosphate adenylyltransferase from Bacillus licheniformis (strain ATCC 14580 / DSM 13 / JCM 2505 / CCUG 7422 / NBRC 12200 / NCIMB 9375 / NCTC 10341 / NRRL NRS-1264 / Gibson 46).